The chain runs to 309 residues: tRNA pseudouridine synthase B (309 aa).

The Nucleophile role is filled by Asp-39. In terms of domain architecture, PUA spans 229–306 (LPRVVVHQES…ERVLTLRKVF (78 aa)).

Belongs to the pseudouridine synthase TruB family. Type 1 subfamily.

It carries out the reaction uridine(55) in tRNA = pseudouridine(55) in tRNA. Responsible for synthesis of pseudouridine from uracil-55 in the psi GC loop of transfer RNAs. The polypeptide is tRNA pseudouridine synthase B (Thermotoga maritima (strain ATCC 43589 / DSM 3109 / JCM 10099 / NBRC 100826 / MSB8)).